Here is a 497-residue protein sequence, read N- to C-terminus: Bypass of stop codon protein 6 (497 aa).

Residues 1 to 72 are Lumenal-facing; sequence MDASSVPPKV…KVKTYPLNYQ (72 aa). Serine 37 and serine 41 each carry phosphoserine. Asparagine 49 carries an N-linked (GlcNAc...) asparagine glycan. A helical membrane pass occupies residues 73 to 93; it reads TVPLVKLQVIACLIMFVVFGM. Residues 94–144 are Cytoplasmic-facing; that stretch reads NDQTVGALLPTLIEYYHISRVDVSNVFIVQLCGYVMASLSKERLNKHFGMR. A helical transmembrane segment spans residues 145–165; sequence GGMLLAAGLCIVFLIILATAP. The Lumenal segment spans residues 166 to 167; it reads SS. A helical membrane pass occupies residues 168–188; the sequence is FYVCMFCGLPLGLGIGILDST. The Cytoplasmic segment spans residues 189-205; sequence GNVLMGSLLVHKNELMG. The chain crosses the membrane as a helical span at residues 206–226; the sequence is IMHGLYGAAAMVTPPLVSYFV. Residues 227 to 232 are Lumenal-facing; it reads EWGHWS. A helical membrane pass occupies residues 233 to 253; that stretch reads LFFLIPLFFSIIGMIVIFPAF. Residues 254–300 are Cytoplasmic-facing; it reads KFETASKYDYLCSVENKESNNDVEEAGDNSLMESTKASPGFFELLRN. Residues 301-321 form a helical membrane-spanning segment; the sequence is PAIFLYSLYLFLYLGAEITTG. Residues 322-340 lie on the Lumenal side of the membrane; that stretch reads SWFFSYLLETKSSNKVAMS. The chain crosses the membrane as a helical span at residues 341–361; sequence YIAASFWTGLTVGRLCLGFVT. Over 362-373 the chain is Cytoplasmic; the sequence is ERFFENEYKASK. The helical transmembrane segment at 374–394 threads the bilayer; it reads AYAFLTLSSYTLFVLVGLINS. The Lumenal segment spans residues 395 to 397; that stretch reads SSV. The chain crosses the membrane as a helical span at residues 398–418; that stretch reads FYFVVLFFVVFCCGTFIGPLF. Over 419-439 the chain is Cytoplasmic; that stretch reads PNASIVALQVLPKRLHVSGVG. Residues 440–460 form a helical membrane-spanning segment; that stretch reads VAVAVGGCGGAAIPYLAGVIA. Residues 461–462 lie on the Lumenal side of the membrane; the sequence is HT. A helical transmembrane segment spans residues 463 to 483; sequence VGIQYIPLLCWIMVALFTLEW. The Cytoplasmic segment spans residues 484–497; it reads TLYPKFIKGHEEYF.

Belongs to the major facilitator superfamily.

It localises to the golgi apparatus. The protein localises to the cis-Golgi network membrane. In terms of biological role, probable transporter. The chain is Bypass of stop codon protein 6 (BSC6) from Saccharomyces cerevisiae (strain ATCC 204508 / S288c) (Baker's yeast).